A 421-amino-acid chain; its full sequence is Putative zinc finger protein R05D3.3 (421 aa).

2 C2H2-type zinc fingers span residues 207 to 228 (VLCVICNEWICSRNRKNHIEAH) and 234 to 257 (YKCSACSYARRREIFVDQHIRTQH). Residues 400–421 (GSSITDSNEPGPSEIKKELAEV) are disordered.

The protein resides in the nucleus. This is Putative zinc finger protein R05D3.3 from Caenorhabditis elegans.